Consider the following 379-residue polypeptide: Cytochrome b (379 aa).

4 helical membrane passes run 34–54 (FGSL…LLAM), 78–99 (WLIR…YLHI), 114–134 (WNTG…GYVL), and 179–199 (FFAL…IHLT). 2 residues coordinate heme b: His84 and His98. Residues His183 and His197 each contribute to the heme b site. Residue His202 participates in a ubiquinone binding. A run of 4 helical transmembrane segments spans residues 227 to 247 (LKDI…AFFS), 289 to 309 (LGGV…PFLH), 321 to 341 (LSQV…WIGS), and 348 to 368 (FIII…ILFP).

Belongs to the cytochrome b family. In terms of assembly, the cytochrome bc1 complex contains 11 subunits: 3 respiratory subunits (MT-CYB, CYC1 and UQCRFS1), 2 core proteins (UQCRC1 and UQCRC2) and 6 low-molecular weight proteins (UQCRH/QCR6, UQCRB/QCR7, UQCRQ/QCR8, UQCR10/QCR9, UQCR11/QCR10 and a cleavage product of UQCRFS1). This cytochrome bc1 complex then forms a dimer. Heme b serves as cofactor.

It is found in the mitochondrion inner membrane. Component of the ubiquinol-cytochrome c reductase complex (complex III or cytochrome b-c1 complex) that is part of the mitochondrial respiratory chain. The b-c1 complex mediates electron transfer from ubiquinol to cytochrome c. Contributes to the generation of a proton gradient across the mitochondrial membrane that is then used for ATP synthesis. The sequence is that of Cytochrome b (MT-CYB) from Casuarius bennetti (Dwarf cassowary).